The chain runs to 83 residues: Cytochrome b559 subunit alpha (83 aa).

A helical membrane pass occupies residues 21-35 (VIHSITIPSLFIAGW). A heme-binding site is contributed by His23.

It belongs to the PsbE/PsbF family. Heterodimer of an alpha subunit and a beta subunit. PSII is composed of 1 copy each of membrane proteins PsbA, PsbB, PsbC, PsbD, PsbE, PsbF, PsbH, PsbI, PsbJ, PsbK, PsbL, PsbM, PsbT, PsbX, PsbY, PsbZ, Psb30/Ycf12, at least 3 peripheral proteins of the oxygen-evolving complex and a large number of cofactors. It forms dimeric complexes. It depends on heme b as a cofactor.

It is found in the plastid. The protein localises to the chloroplast thylakoid membrane. In terms of biological role, this b-type cytochrome is tightly associated with the reaction center of photosystem II (PSII). PSII is a light-driven water:plastoquinone oxidoreductase that uses light energy to abstract electrons from H(2)O, generating O(2) and a proton gradient subsequently used for ATP formation. It consists of a core antenna complex that captures photons, and an electron transfer chain that converts photonic excitation into a charge separation. The protein is Cytochrome b559 subunit alpha of Physcomitrium patens (Spreading-leaved earth moss).